The primary structure comprises 119 residues: Holo-[acyl-carrier-protein] synthase (119 aa).

Residues aspartate 8 and glutamate 59 each contribute to the Mg(2+) site.

The protein belongs to the P-Pant transferase superfamily. AcpS family. It depends on Mg(2+) as a cofactor.

It localises to the cytoplasm. It carries out the reaction apo-[ACP] + CoA = holo-[ACP] + adenosine 3',5'-bisphosphate + H(+). Functionally, transfers the 4'-phosphopantetheine moiety from coenzyme A to a Ser of acyl-carrier-protein. In Staphylococcus aureus (strain JH1), this protein is Holo-[acyl-carrier-protein] synthase.